Here is a 122-residue protein sequence, read N- to C-terminus: Large ribosomal subunit protein uL14 (122 aa).

The protein belongs to the universal ribosomal protein uL14 family. Part of the 50S ribosomal subunit. Forms a cluster with proteins L3 and L19. In the 70S ribosome, L14 and L19 interact and together make contacts with the 16S rRNA in bridges B5 and B8.

In terms of biological role, binds to 23S rRNA. Forms part of two intersubunit bridges in the 70S ribosome. The sequence is that of Large ribosomal subunit protein uL14 from Methylibium petroleiphilum (strain ATCC BAA-1232 / LMG 22953 / PM1).